Here is a 668-residue protein sequence, read N- to C-terminus: mRNA cap guanine-N(7) methyltransferase (668 aa).

A compositionally biased stretch (basic and acidic residues) spans 1-19 (MYDPARDSWEERDGDEARS). The disordered stretch occupies residues 1–281 (MYDPARDSWE…RAQVEEAMRA (281 aa)). Over residues 44-65 (GENNNTTDLQQHPDPSSKTTAS) the composition is skewed to polar residues. Positions 73–88 (SQPAQPTTQTPPSVST) are enriched in low complexity. A compositionally biased stretch (polar residues) spans 100–129 (KASNPQSLTSTAQNQLNKSNTTMENTSGSA). A compositionally biased stretch (basic and acidic residues) spans 133–142 (PRADPSDKPN). Positions 148–157 (ASPTDQNGSQ) are enriched in polar residues. Basic and acidic residues predominate over residues 257–279 (LVDRETLRRRQEERERAQVEEAM). Residues 310–668 (SKIKGLRSFN…FYHAFCFYKV (359 aa)) enclose the mRNA cap 0 methyltransferase domain. 319-320 (NN) contributes to the mRNA binding site. S-adenosyl-L-methionine is bound by residues Lys323, Gly366, Asp390, Asp428, 471–473 (MFT), and Tyr476. Positions 524-547 (ARQAQAKKEKSDEAPEDGEVEEDD) are disordered. Positions 537-547 (APEDGEVEEDD) are enriched in acidic residues.

Belongs to the class I-like SAM-binding methyltransferase superfamily. mRNA cap 0 methyltransferase family.

The protein localises to the nucleus. It catalyses the reaction a 5'-end (5'-triphosphoguanosine)-ribonucleoside in mRNA + S-adenosyl-L-methionine = a 5'-end (N(7)-methyl 5'-triphosphoguanosine)-ribonucleoside in mRNA + S-adenosyl-L-homocysteine. Functionally, responsible for methylating the 5'-cap structure of mRNAs. The sequence is that of mRNA cap guanine-N(7) methyltransferase (abd1) from Aspergillus fumigatus (strain ATCC MYA-4609 / CBS 101355 / FGSC A1100 / Af293) (Neosartorya fumigata).